A 751-amino-acid polypeptide reads, in one-letter code: Conserved oligomeric Golgi complex subunit 5 (751 aa).

Disordered stretches follow at residues 1–21 (MVTG…DDND) and 244–263 (SPTH…KTPQ).

The protein belongs to the COG5 family. As to quaternary structure, component of the conserved oligomeric Golgi complex which is composed of eight different subunits and is required for normal Golgi morphology and localization.

Its subcellular location is the golgi apparatus membrane. Required for normal Golgi function and necessary during spermatogenesis. Required for cleavage furrow ingression during cytokinesis in dividing spermatocytes and for the extensive polarized cell growth that accompanies spermatid elongation. The sequence is that of Conserved oligomeric Golgi complex subunit 5 (fws) from Drosophila melanogaster (Fruit fly).